Reading from the N-terminus, the 359-residue chain is Probable dual-specificity RNA methyltransferase RlmN (359 aa).

Catalysis depends on E99, which acts as the Proton acceptor. In terms of domain architecture, Radical SAM core spans 105-342 (TENRRTACVS…VTIRKSYGTT (238 aa)). C112 and C347 are oxidised to a cystine. 3 residues coordinate [4Fe-4S] cluster: C119, C123, and C126. S-adenosyl-L-methionine contacts are provided by residues 171 to 172 (GE), S204, 227 to 229 (SLH), and N304. Residue C347 is the S-methylcysteine intermediate of the active site.

It belongs to the radical SAM superfamily. RlmN family. It depends on [4Fe-4S] cluster as a cofactor.

The protein resides in the cytoplasm. The enzyme catalyses adenosine(2503) in 23S rRNA + 2 reduced [2Fe-2S]-[ferredoxin] + 2 S-adenosyl-L-methionine = 2-methyladenosine(2503) in 23S rRNA + 5'-deoxyadenosine + L-methionine + 2 oxidized [2Fe-2S]-[ferredoxin] + S-adenosyl-L-homocysteine. It catalyses the reaction adenosine(37) in tRNA + 2 reduced [2Fe-2S]-[ferredoxin] + 2 S-adenosyl-L-methionine = 2-methyladenosine(37) in tRNA + 5'-deoxyadenosine + L-methionine + 2 oxidized [2Fe-2S]-[ferredoxin] + S-adenosyl-L-homocysteine. Specifically methylates position 2 of adenine 2503 in 23S rRNA and position 2 of adenine 37 in tRNAs. This chain is Probable dual-specificity RNA methyltransferase RlmN, found in Pelodictyon phaeoclathratiforme (strain DSM 5477 / BU-1).